The sequence spans 245 residues: 8-amino-3,8-dideoxy-manno-octulosonate cytidylyltransferase (245 aa).

Belongs to the KdsB family.

The protein resides in the cytoplasm. It carries out the reaction 8-amino-3,8-dideoxy-alpha-D-manno-octulosonate + CTP = CMP-8-amino-3,8-dideoxy-alpha-D-manno-oct-2-ulosonate + diphosphate. Its pathway is bacterial outer membrane biogenesis; lipopolysaccharide biosynthesis. Activates KDO8N (a required 8-carbon sugar) for incorporation into bacterial lipopolysaccharide in the Shewanella genus. In Shewanella sediminis (strain HAW-EB3), this protein is 8-amino-3,8-dideoxy-manno-octulosonate cytidylyltransferase.